Here is a 297-residue protein sequence, read N- to C-terminus: Bifunctional protein FolD (297 aa).

NADP(+) contacts are provided by residues 166–168, serine 191, and isoleucine 232; that span reads GRS.

Belongs to the tetrahydrofolate dehydrogenase/cyclohydrolase family. As to quaternary structure, homodimer.

It catalyses the reaction (6R)-5,10-methylene-5,6,7,8-tetrahydrofolate + NADP(+) = (6R)-5,10-methenyltetrahydrofolate + NADPH. The catalysed reaction is (6R)-5,10-methenyltetrahydrofolate + H2O = (6R)-10-formyltetrahydrofolate + H(+). It participates in one-carbon metabolism; tetrahydrofolate interconversion. Functionally, catalyzes the oxidation of 5,10-methylenetetrahydrofolate to 5,10-methenyltetrahydrofolate and then the hydrolysis of 5,10-methenyltetrahydrofolate to 10-formyltetrahydrofolate. The sequence is that of Bifunctional protein FolD from Phenylobacterium zucineum (strain HLK1).